Here is a 302-residue protein sequence, read N- to C-terminus: Bifunctional protein FolD 2 (302 aa).

NADP(+) is bound by residues 170 to 172, Ser195, and Ile236; that span reads GRS.

This sequence belongs to the tetrahydrofolate dehydrogenase/cyclohydrolase family. Homodimer.

It catalyses the reaction (6R)-5,10-methylene-5,6,7,8-tetrahydrofolate + NADP(+) = (6R)-5,10-methenyltetrahydrofolate + NADPH. It carries out the reaction (6R)-5,10-methenyltetrahydrofolate + H2O = (6R)-10-formyltetrahydrofolate + H(+). It functions in the pathway one-carbon metabolism; tetrahydrofolate interconversion. Its function is as follows. Catalyzes the oxidation of 5,10-methylenetetrahydrofolate to 5,10-methenyltetrahydrofolate and then the hydrolysis of 5,10-methenyltetrahydrofolate to 10-formyltetrahydrofolate. The polypeptide is Bifunctional protein FolD 2 (Paracoccus denitrificans (strain Pd 1222)).